The primary structure comprises 51 residues: Protein I177L (51 aa).

N-linked (GlcNAc...) asparagine; by host glycosylation is present at N11.

The protein belongs to the asfivirus I177L family.

It localises to the virion. The polypeptide is Protein I177L (Ornithodoros (relapsing fever ticks)).